Here is a 172-residue protein sequence, read N- to C-terminus: Keratin, high-sulfur matrix protein, B2A (172 aa).

Alanine 2 bears the N-acetylalanine mark. 5 repeats span residues 27–36 (PTCCQTSCCQ), 37–46 (PTSIQTSCCQ), 47–56 (PISIQTSCCQ), 57–66 (PTSIQTSCCQ), and 67–76 (PTCLQTSGCE).

The keratin products of mammalian epidermal derivatives such as wool and hair consist of microfibrils embedded in a rigid matrix of other proteins. The matrix proteins include the high-sulfur and high-tyrosine keratins, having molecular weights of 6-20 kDa, whereas the microfibrils contain the larger, low-sulfur keratins (40-56 kDa). The polypeptide is Keratin, high-sulfur matrix protein, B2A (Ovis aries (Sheep)).